The primary structure comprises 254 residues: MLLVIDVGNSNIVLGICDGTQLVRNWRISTDKSRTSDEYGVLLHSLFASAGLGFDTVDAAIISSVVPPLTGVMEAICRDFFHLTPFVVGPGIKTGMPILYDNPREVGADRIVNAVAGYEKHKCSLVIVDFGTATTFDYVNARGEYCGGAIAPGLAISLEALFQRASKLPRVDIARPPQIIARNTVNSMQAGIFYGYVGLVDEIVNRIVAESKDTPRVIATGGLAKLIAPESRTIVEVDDFLTLDGLKILYERNR.

Position 6-13 (6-13 (DVGNSNIV)) interacts with ATP. Substrate contacts are provided by residues tyrosine 100 and 107–110 (GADR). Catalysis depends on aspartate 109, which acts as the Proton acceptor. Aspartate 129 serves as a coordination point for K(+). Threonine 132 serves as a coordination point for ATP. Threonine 184 is a binding site for substrate.

Belongs to the type III pantothenate kinase family. In terms of assembly, homodimer. NH4(+) is required as a cofactor. K(+) serves as cofactor.

It is found in the cytoplasm. It catalyses the reaction (R)-pantothenate + ATP = (R)-4'-phosphopantothenate + ADP + H(+). It participates in cofactor biosynthesis; coenzyme A biosynthesis; CoA from (R)-pantothenate: step 1/5. In terms of biological role, catalyzes the phosphorylation of pantothenate (Pan), the first step in CoA biosynthesis. The protein is Type III pantothenate kinase of Pelobacter propionicus (strain DSM 2379 / NBRC 103807 / OttBd1).